A 124-amino-acid polypeptide reads, in one-letter code: Large ribosomal subunit protein bL12 (124 aa).

The protein belongs to the bacterial ribosomal protein bL12 family. In terms of assembly, homodimer. Part of the ribosomal stalk of the 50S ribosomal subunit. Forms a multimeric L10(L12)X complex, where L10 forms an elongated spine to which 2 to 4 L12 dimers bind in a sequential fashion. Binds GTP-bound translation factors.

Forms part of the ribosomal stalk which helps the ribosome interact with GTP-bound translation factors. Is thus essential for accurate translation. The protein is Large ribosomal subunit protein bL12 of Ralstonia nicotianae (strain ATCC BAA-1114 / GMI1000) (Ralstonia solanacearum).